Consider the following 130-residue polypeptide: Chorion class B protein PC10 (130 aa).

Residues 1-22 (GAWNGRLGCGCGGIAPAAELAA) form a left arm region. The segment at 23–93 (SYGGGLGVAS…GNGALGITAE (71 aa)) is central domain. The segment at 94-130 (RGYGAGIGYEGLGLGYGAGIGYKGYGLGGCGCGCGRL) is right arm (Gly-rich tandem repeats).

The protein belongs to the chorion protein family.

Its function is as follows. This protein is one of many from the eggshell of the silk moth. The protein is Chorion class B protein PC10 of Antheraea polyphemus (Polyphemus moth).